The primary structure comprises 544 residues: Spore germination protein KA (544 aa).

The interval 1–36 is disordered; it reads MPLFSKRKNNTDSKDKQNTDERNQEQQQEKERPVLI. Basic and acidic residues predominate over residues 9–33; that stretch reads NNTDSKDKQNTDERNQEQQQEKERP. 5 consecutive transmembrane segments (helical) span residues 279-299, 321-341, 392-412, 416-436, and 443-463; these read FAII…FVQF, VLVF…TTFH, AVSI…GIVS, VIIV…AMAI, and FIFI…GIIM. A compositionally biased stretch (basic and acidic residues) spans 504-523; it reads KRPESVSKEDKVRQGKDQRP. The segment at 504–544 is disordered; it reads KRPESVSKEDKVRQGKDQRPEPAASRGMVNKDLEEGDQNGT.

The protein belongs to the GerABKA family.

Its subcellular location is the cell membrane. Involved in the germination response to the combination of glucose, fructose, L-asparagine, and KCl. This chain is Spore germination protein KA (gerKA), found in Bacillus subtilis (strain 168).